We begin with the raw amino-acid sequence, 456 residues long: UDP-N-acetylmuramate--L-alanine ligase (456 aa).

Position 112–118 (112–118 (GAHGKTS)) interacts with ATP.

The protein belongs to the MurCDEF family.

Its subcellular location is the cytoplasm. The enzyme catalyses UDP-N-acetyl-alpha-D-muramate + L-alanine + ATP = UDP-N-acetyl-alpha-D-muramoyl-L-alanine + ADP + phosphate + H(+). It functions in the pathway cell wall biogenesis; peptidoglycan biosynthesis. In terms of biological role, cell wall formation. This is UDP-N-acetylmuramate--L-alanine ligase from Desulforapulum autotrophicum (strain ATCC 43914 / DSM 3382 / VKM B-1955 / HRM2) (Desulfobacterium autotrophicum).